A 103-amino-acid polypeptide reads, in one-letter code: Small ribosomal subunit protein uS10 (103 aa).

Belongs to the universal ribosomal protein uS10 family. In terms of assembly, part of the 30S ribosomal subunit.

Involved in the binding of tRNA to the ribosomes. The chain is Small ribosomal subunit protein uS10 from Shewanella loihica (strain ATCC BAA-1088 / PV-4).